The sequence spans 328 residues: Alanine racemase (328 aa).

Lys-33 (proton acceptor; specific for D-alanine) is an active-site residue. Position 33 is an N6-(pyridoxal phosphate)lysine (Lys-33). Arg-118 contributes to the substrate binding site. The active-site Proton acceptor; specific for L-alanine is the Tyr-237. Met-283 contributes to the substrate binding site.

It belongs to the alanine racemase family. It depends on pyridoxal 5'-phosphate as a cofactor.

It catalyses the reaction L-alanine = D-alanine. The protein operates within amino-acid biosynthesis; D-alanine biosynthesis; D-alanine from L-alanine: step 1/1. Functionally, catalyzes the interconversion of L-alanine and D-alanine. May also act on other amino acids. This is Alanine racemase (alr) from Campylobacter jejuni subsp. jejuni serotype O:2 (strain ATCC 700819 / NCTC 11168).